Consider the following 257-residue polypeptide: 3-deoxy-manno-octulosonate cytidylyltransferase (257 aa).

It belongs to the KdsB family.

Its subcellular location is the cytoplasm. The enzyme catalyses 3-deoxy-alpha-D-manno-oct-2-ulosonate + CTP = CMP-3-deoxy-beta-D-manno-octulosonate + diphosphate. It functions in the pathway nucleotide-sugar biosynthesis; CMP-3-deoxy-D-manno-octulosonate biosynthesis; CMP-3-deoxy-D-manno-octulosonate from 3-deoxy-D-manno-octulosonate and CTP: step 1/1. Its pathway is bacterial outer membrane biogenesis; lipopolysaccharide biosynthesis. Its function is as follows. Activates KDO (a required 8-carbon sugar) for incorporation into bacterial lipopolysaccharide in Gram-negative bacteria. The protein is 3-deoxy-manno-octulosonate cytidylyltransferase of Stenotrophomonas maltophilia (strain K279a).